The following is a 185-amino-acid chain: ADP-ribosylation factor (185 aa).

Gly2 carries the N-myristoyl glycine lipid modification. GTP-binding positions include 27–34 (GLDAAGKT), 70–74 (DVGGQ), and 129–132 (NKQD).

It belongs to the small GTPase superfamily. Arf family.

It is found in the golgi apparatus. In terms of biological role, GTP-binding protein involved in protein trafficking; may modulate vesicle budding and uncoating within the Golgi apparatus. This Neurospora crassa (strain ATCC 24698 / 74-OR23-1A / CBS 708.71 / DSM 1257 / FGSC 987) protein is ADP-ribosylation factor.